The sequence spans 357 residues: N-acetyl-gamma-glutamyl-phosphate reductase (357 aa).

Cys-151 is an active-site residue.

Belongs to the NAGSA dehydrogenase family. Type 1 subfamily.

The protein localises to the cytoplasm. It carries out the reaction N-acetyl-L-glutamate 5-semialdehyde + phosphate + NADP(+) = N-acetyl-L-glutamyl 5-phosphate + NADPH + H(+). It participates in amino-acid biosynthesis; L-arginine biosynthesis; N(2)-acetyl-L-ornithine from L-glutamate: step 3/4. Catalyzes the NADPH-dependent reduction of N-acetyl-5-glutamyl phosphate to yield N-acetyl-L-glutamate 5-semialdehyde. This chain is N-acetyl-gamma-glutamyl-phosphate reductase, found in Corynebacterium kroppenstedtii (strain DSM 44385 / JCM 11950 / CIP 105744 / CCUG 35717).